The following is a 369-amino-acid chain: tRNA/tmRNA (uracil-C(5))-methyltransferase (369 aa).

S-adenosyl-L-methionine is bound by residues Q192, Y221, N226, E242, and D302. The Nucleophile role is filled by C327. E361 functions as the Proton acceptor in the catalytic mechanism.

The protein belongs to the class I-like SAM-binding methyltransferase superfamily. RNA M5U methyltransferase family. TrmA subfamily.

The enzyme catalyses uridine(54) in tRNA + S-adenosyl-L-methionine = 5-methyluridine(54) in tRNA + S-adenosyl-L-homocysteine + H(+). It carries out the reaction uridine(341) in tmRNA + S-adenosyl-L-methionine = 5-methyluridine(341) in tmRNA + S-adenosyl-L-homocysteine + H(+). Functionally, dual-specificity methyltransferase that catalyzes the formation of 5-methyluridine at position 54 (m5U54) in all tRNAs, and that of position 341 (m5U341) in tmRNA (transfer-mRNA). The protein is tRNA/tmRNA (uracil-C(5))-methyltransferase of Haemophilus ducreyi (strain 35000HP / ATCC 700724).